We begin with the raw amino-acid sequence, 385 residues long: Phosphorylated adapter RNA export protein (385 aa).

A compositionally biased stretch (acidic residues) spans 1–18 (MALEAGDMEEGQLSDSDS). The interval 1 to 28 (MALEAGDMEEGQLSDSDSDMTVVPSDRP) is disordered. The residue at position 2 (Ala-2) is an N-acetylalanine. Residues 2 to 320 (ALEAGDMEEG…KAARKRRTQL (319 aa)) form a necessary for interaction with CBP80 region. Phosphoserine is present on residues Ser-14, Ser-16, Ser-56, Ser-57, Ser-60, and Ser-63. The short motif at 71–74 (KRKR) is the Nuclear localization signal element. The interval 75-101 (QKCHNTPPKPEPFPFGPSGQKTALNGG) is disordered. The Nuclear export signal signature appears at 120–129 (VATELGILGM). Basic and acidic residues predominate over residues 164 to 184 (KDLDEYMHGDKKPGSKEDENG). The interval 164–192 (KDLDEYMHGDKKPGSKEDENGQGHLKRKR) is disordered. The short motif at 189–192 (KRKR) is the Nuclear localization signal element. The interval 219-319 (EKVADEIAFR…KKAARKRRTQ (101 aa)) is sufficient for poly U RNA-binding. The necessary for poly U RNA-binding and snRNA export stretch occupies residues 270–278 (GSRRRTPGG). Position 287 is a phosphothreonine (Thr-287). The disordered stretch occupies residues 335 to 385 (QEDDDTSRETFASDTNEALASLDEAQEGPGETKLDAEEAIEVDHPQDLDIF). The span at 343 to 352 (ETFASDTNEA) shows a compositional bias: polar residues. Ser-347 is subject to Phosphoserine. The span at 364 to 385 (GETKLDAEEAIEVDHPQDLDIF) shows a compositional bias: basic and acidic residues.

This sequence belongs to the PHAX family. As to quaternary structure, found in a U snRNA export complex with PHAX/RNUXA, NCBP1/CBP80, NCBP2/CBP20, RAN, XPO1 and m7G-capped RNA. Part of a precomplex with PHAX/RNUXA, NCBP1/CBP80, NCBP2/CBP20 and m7G-capped RNA. Interacts with NCBP1/CBP80. Found in a complex with snoRNA. Interacts with NCBP2/CBP20. Interacts with DDX39A; this interaction stimulates PHAX RNA binding activity. Post-translationally, phosphorylated in the nucleus. Dephosphorylated in the cytoplasm.

The protein resides in the nucleus. The protein localises to the nucleoplasm. It localises to the cajal body. It is found in the cytoplasm. A phosphoprotein adapter involved in the XPO1-mediated U snRNA export from the nucleus. Bridge components required for U snRNA export, the cap binding complex (CBC)-bound snRNA on the one hand and the GTPase Ran in its active GTP-bound form together with the export receptor XPO1 on the other. Its phosphorylation in the nucleus is required for U snRNA export complex assembly and export, while its dephosphorylation in the cytoplasm causes export complex disassembly. It is recycled back to the nucleus via the importin alpha/beta heterodimeric import receptor. The directionality of nuclear export is thought to be conferred by an asymmetric distribution of the GTP- and GDP-bound forms of Ran between the cytoplasm and nucleus. Its compartmentalized phosphorylation cycle may also contribute to the directionality of export. Binds strongly to m7G-capped U1 and U5 small nuclear RNAs (snRNAs) in a sequence-unspecific manner and phosphorylation-independent manner. Also plays a role in the biogenesis of U3 small nucleolar RNA (snoRNA). Involved in the U3 snoRNA transport from nucleoplasm to Cajal bodies. Binds strongly to m7G-capped U3, U8 and U13 precursor snoRNAs and weakly to trimethylated (TMG)-capped U3, U8 and U13 snoRNAs. Also binds to telomerase RNA. The sequence is that of Phosphorylated adapter RNA export protein (Phax) from Mus musculus (Mouse).